Reading from the N-terminus, the 564-residue chain is Histone acetyltransferase rtt109 (564 aa).

Acetyl-CoA contacts are provided by residues phenylalanine 138, 157–159 (HVL), and tryptophan 167. The Proton donor/acceptor role is filled by aspartate 261. Residue lysine 263 is modified to N6-acetyllysine; by autocatalysis. Disordered regions lie at residues 355–420 (YDKV…NAFY) and 506–549 (RKKD…ESPG). Residues 366–377 (AVSVSTDSQSSD) are compositionally biased toward low complexity. 2 stretches are compositionally biased toward polar residues: residues 394–417 (DPST…TDQN) and 512–521 (SQATTATSAQ). Over residues 529–544 (GTVSTAVTAEASTTGT) the composition is skewed to low complexity.

The protein belongs to the RTT109 family.

It is found in the nucleus. It localises to the vacuole. It catalyses the reaction L-lysyl-[protein] + acetyl-CoA = N(6)-acetyl-L-lysyl-[protein] + CoA + H(+). The enzyme catalyses L-lysyl-[histone] + acetyl-CoA = N(6)-acetyl-L-lysyl-[histone] + CoA + H(+). Functionally, histone chaperone-dependent acetylase that modifies 'Lys-56' of histone H3 (H3K56ac). Histone H3 'Lys-56' acetylation may be required for S-phase-linked DNA damage tolerance. Also acetylates 'Lys-9' of histone H3 (H3K9ac). Autoacetylates. In Aspergillus flavus, this protein is Histone acetyltransferase rtt109.